We begin with the raw amino-acid sequence, 315 residues long: PIH1 domain-containing protein 2 (315 aa).

Belongs to the PIH1 family.

This is PIH1 domain-containing protein 2 (PIH1D2) from Bos taurus (Bovine).